A 158-amino-acid polypeptide reads, in one-letter code: Protein OPG060 (158 aa).

Belongs to the orthopoxvirus OPG058 family.

The protein is Protein OPG060 (OPG060) of Homo sapiens (Human).